A 119-amino-acid polypeptide reads, in one-letter code: uncharacterized protein (119 aa).

Residues 1–23 (MVKWAVSILVNALLLIVIDGYID) form the signal peptide. Transmembrane regions (helical) follow at residues 27 to 47 (ISSI…NVLI), 50 to 70 (LLII…LFVI), and 88 to 108 (IDGF…HLLI).

Its subcellular location is the cell membrane. This is an uncharacterized protein from Bacillus subtilis (strain 168).